The chain runs to 106 residues: MVIRVFLASSSSSVTIKKRQQEVLQFLEANRIEYEEVDITMLEEKRQWMYKNIPKDRLPAQGNPLPPQIFNNNIYCGDYESFFESKESNTVLLFLQLKARPAQKEL.

Positions 61–67 (QGNPLPP) match the SH3-binding motif.

The protein belongs to the SH3BGR family.

The protein resides in the nucleus. This Xenopus laevis (African clawed frog) protein is SH3 domain-binding glutamic acid-rich-like protein 2-B (sh3bgrl2-b).